A 1692-amino-acid polypeptide reads, in one-letter code: Fatty acid synthase alpha subunit hexA (1692 aa).

Residues 44–80 (AVEEPVDETPAPETAPERPPLSRAKTAAVKPQETAAP) form a disordered region. Residues 90–174 (LSAEEIVRAL…RVSSALLSKL (85 aa)) form the Carrier domain. Ser125 carries the O-(pantetheine 4'-phosphoryl)serine modification. Residues 508–746 (FAGKNILITG…IAMLMTPELV (239 aa)) are ketoreductase (KR) domain. Residues 948-1430 (KEYLHEVAVE…QKGGQVVGVA (483 aa)) enclose the Ketosynthase family 3 (KS3) domain. The For beta-ketoacyl synthase activity role is filled by Cys1135. Residues 1263-1287 (GQAQLDKSSPSTNTTSRTSSVSLAR) are disordered. Residues 1270-1284 (SSPSTNTTSRTSSVS) show a composition bias toward low complexity. Catalysis depends on for beta-ketoacyl synthase activity residues His1315 and His1356. Asp1569 is a Mg(2+) binding site. Residues 1569–1571 (DLV), 1615–1625 (EAVFKCLHTQT), 1639–1642 (KSDN), and 1668–1670 (ISH) each bind acetyl-CoA. Ser1669 contacts Mg(2+).

Belongs to the thiolase-like superfamily. Fungal fatty acid synthetase subunit alpha family. [Alpha(6)beta(6)] hexamers of two multifunctional subunits (alpha and beta). 4'-phosphopantetheine is transferred from CoA to a specific serine of the acyl carrier domain by the C-terminal PPT domain. This modification is essential for activity because fatty acids are bound in thioester linkage to the sulfhydryl of the prosthetic group.

It catalyses the reaction acetyl-CoA + n malonyl-CoA + 2n NADPH + 4n H(+) = a long-chain-acyl-CoA + n CoA + n CO2 + 2n NADP(+).. It carries out the reaction a fatty acyl-[ACP] + malonyl-[ACP] + H(+) = a 3-oxoacyl-[ACP] + holo-[ACP] + CO2. The catalysed reaction is a (3R)-hydroxyacyl-[ACP] + NADP(+) = a 3-oxoacyl-[ACP] + NADPH + H(+). It functions in the pathway mycotoxin biosynthesis. Fatty acid synthase alpha subunit; part of the fragmented gene cluster that mediates the biosynthesis of dothistromin (DOTH), a polyketide toxin very similar in structure to the aflatoxin precursor, versicolorin B. The first step of the pathway is the conversion of acetate to norsolorinic acid (NOR) and requires the fatty acid synthase subunits hexA and hexB, as well as the polyketide synthase pksA. PksA combines a hexanoyl starter unit and 7 malonyl-CoA extender units to synthesize the precursor NOR. The hexanoyl starter unit is provided to the acyl-carrier protein (ACP) domain by the fungal fatty acid synthase hexA/hexB. The second step is the conversion of NOR to averantin (AVN) and requires the norsolorinic acid ketoreductase nor1, which catalyzes the dehydration of norsolorinic acid to form (1'S)-averantin. The cytochrome P450 monooxygenase avnA then catalyzes the hydroxylation of AVN to 5'hydroxyaverantin (HAVN). The next step is performed by adhA that transforms HAVN to averufin (AVF). Averufin might then be converted to hydroxyversicolorone by cypX and avfA. Hydroxyversicolorone is further converted versiconal hemiacetal acetate (VHA) by moxY. VHA is then the substrate for the versiconal hemiacetal acetate esterase est1 to yield versiconal (VAL). Versicolorin B synthase vbsA then converts VAL to versicolorin B (VERB) by closing the bisfuran ring. Then, the activity of the versicolorin B desaturase verB leads to versicolorin A (VERA). DotB, a predicted chloroperoxidase, may perform epoxidation of the A-ring of VERA. Alternatively, a cytochrome P450, such as cypX or avnA could catalyze this step. It is also possible that another, uncharacterized, cytochrome P450 enzyme is responsible for this step. Opening of the epoxide could potentially be achieved by the epoxide hydrolase epoA. However, epoA seems not to be required for DOTH biosynthesis, but other epoxide hydrolases may have the ability to complement this hydrolysis. Alternatively, opening of the epoxide ring could be achieved non-enzymatically. The next step is the deoxygenation of ring A to yield the 5,8-dihydroxyanthraquinone which is most likely catalyzed by the NADPH dehydrogenase encoded by ver1. The last stages of DOTH biosynthesis are proposed to involve hydroxylation of the bisfuran. OrdB and norB might have oxidative roles here. An alternative possibility is that cytochrome P450 monoogenases such as avnA and cypX might perform these steps in addition to previously proposed steps. This chain is Fatty acid synthase alpha subunit hexA, found in Dothistroma septosporum (strain NZE10 / CBS 128990) (Red band needle blight fungus).